We begin with the raw amino-acid sequence, 381 residues long: E3 ubiquitin-protein ligase Fancl (381 aa).

Residues Asn-110–Pro-293 are UBC-RWD region (URD). The RING-CH-type; degenerate zinc finger occupies Glu-303–Ser-374. Positions 311, 314, 329, 334, 339, 342, 364, and 367 each coordinate Zn(2+).

Interacts (via C-terminus) with FANCI and Fancd2.

It is found in the nucleus. The catalysed reaction is S-ubiquitinyl-[E2 ubiquitin-conjugating enzyme]-L-cysteine + [acceptor protein]-L-lysine = [E2 ubiquitin-conjugating enzyme]-L-cysteine + N(6)-ubiquitinyl-[acceptor protein]-L-lysine.. It functions in the pathway protein modification; protein ubiquitination. In terms of biological role, ubiquitin ligase protein that mediates monoubiquitination of Fancd2. Ubiquitination of Fancd2 is stimulated by ionising radiation. Together with Fancd2, and probably FANCI, involved in DNA repair of damage caused by agents that induce interstrand cross-links but not agents that cause double strand breaks. This Drosophila melanogaster (Fruit fly) protein is E3 ubiquitin-protein ligase Fancl.